A 439-amino-acid chain; its full sequence is Serine hydroxymethyltransferase (439 aa).

Residues Leu119 and 123–125 each bind (6S)-5,6,7,8-tetrahydrofolate; that span reads GHL. An N6-(pyridoxal phosphate)lysine modification is found at Lys228. 370–372 is a binding site for (6S)-5,6,7,8-tetrahydrofolate; that stretch reads SPF.

The protein belongs to the SHMT family. Homodimer. Requires pyridoxal 5'-phosphate as cofactor.

The protein localises to the cytoplasm. It catalyses the reaction (6R)-5,10-methylene-5,6,7,8-tetrahydrofolate + glycine + H2O = (6S)-5,6,7,8-tetrahydrofolate + L-serine. The protein operates within one-carbon metabolism; tetrahydrofolate interconversion. Its pathway is amino-acid biosynthesis; glycine biosynthesis; glycine from L-serine: step 1/1. Its function is as follows. Catalyzes the reversible interconversion of serine and glycine with tetrahydrofolate (THF) serving as the one-carbon carrier. This reaction serves as the major source of one-carbon groups required for the biosynthesis of purines, thymidylate, methionine, and other important biomolecules. Also exhibits THF-independent aldolase activity toward beta-hydroxyamino acids, producing glycine and aldehydes, via a retro-aldol mechanism. In Chlorobium phaeobacteroides (strain BS1), this protein is Serine hydroxymethyltransferase.